The primary structure comprises 688 residues: Lap-Emerin-Man domain protein 2 (688 aa).

2 disordered regions span residues 62-113 (LQKE…IDKP) and 202-227 (PQLR…HKRP). Residues 82-92 (PKYLYPSSPSK) are compositionally biased toward low complexity. A compositionally biased stretch (polar residues) spans 212–222 (RLQTSATSSPL). Helical transmembrane passes span 318–338 (YLVH…LALL) and 547–567 (KVFL…INFF). The residue at position 683 (T683) is a Phosphothreonine. At S684 the chain carries Phosphoserine.

It localises to the nucleus inner membrane. Nucleus inner membrane protein involved in meiosis. Plays a role in regulating nuclear envelope (NE) morphology and nuclear integrity, particularly during spindle pole body (SPB) extrusion or insertion through the NE, and perhaps during karyokinesis. The protein is Lap-Emerin-Man domain protein 2 (lem2) of Schizosaccharomyces pombe (strain 972 / ATCC 24843) (Fission yeast).